The chain runs to 463 residues: Protein phosphatase PP2A regulatory subunit B (463 aa).

2 WD repeats span residues 27-66 and 87-128; these read TEADIISAVEFDHTGDYLATGDKGGRVVLFERNHSKKGCE and EIEE…LKVV. Ser-134 is subject to Phosphoserine. 4 WD repeats span residues 174-212, 223-263, 282-320, and 337-378; these read AHAYHINSISVNSDAETYISADDLRINLWNLSISDHSFN, ELTE…LCDN, EIISSISDVKFSQNGRYILSRDYLTLKIWDVNMEKAPVK, and ENDC…PGDR.

The protein belongs to the phosphatase 2A regulatory subunit B family. In terms of assembly, PP2A exists in several trimeric forms, all of which consist of a core composed of a catalytic subunit associated with a 65 kDa (PR65) (Subunit A) and a 55 kDa (PR55) (Subunit B) regulatory subunit.

Functionally, phosphatase 2A affects a variety of biological processes in the cell such as transcription, cell cycle progression and cellular morphogenesis, and provides an initial identification of critical substrates for this phosphatase. The regulatory subunit may direct the catalytic subunit to distinct, albeit overlapping, subsets of substrates. The protein is Protein phosphatase PP2A regulatory subunit B (pab1) of Schizosaccharomyces pombe (strain 972 / ATCC 24843) (Fission yeast).